The primary structure comprises 674 residues: F420-dependent formate dehydrogenase 1 subunit alpha (674 aa).

In terms of domain architecture, 4Fe-4S Mo/W bis-MGD-type spans 3–59; sequence LDFIHTICPYCGTGCGVDLVVKDGTLVGTNPFKRHPVNEGKTCIKGSYCHEFVHRDD. Residues Cys10, Cys13, Cys17, and Cys45 each contribute to the [4Fe-4S] cluster site. Position 132 (Sec132) is a non-standard amino acid, selenocysteine.

It belongs to the prokaryotic molybdopterin-containing oxidoreductase family. Dimer of an alpha (FdhA1) and a beta (FdhB1) subunit. The cofactor is [4Fe-4S] cluster. Mo-bis(molybdopterin guanine dinucleotide) is required as a cofactor. Requires Zn(2+) as cofactor.

It carries out the reaction oxidized coenzyme F420-(gamma-L-Glu)(n) + formate + 2 H(+) = reduced coenzyme F420-(gamma-L-Glu)(n) + CO2. Its function is as follows. Catalyzes the oxidation of formate to carbon dioxide, with coenzyme F420 as the electron acceptor. In vitro can also use methyl viologen as electron acceptor. This chain is F420-dependent formate dehydrogenase 1 subunit alpha, found in Methanococcus maripaludis (strain DSM 14266 / JCM 13030 / NBRC 101832 / S2 / LL).